The primary structure comprises 249 residues: DNA repair protein RecO (249 aa).

Belongs to the RecO family.

Functionally, involved in DNA repair and RecF pathway recombination. The protein is DNA repair protein RecO of Afipia carboxidovorans (strain ATCC 49405 / DSM 1227 / KCTC 32145 / OM5) (Oligotropha carboxidovorans).